Consider the following 157-residue polypeptide: MSSAICPCGSGDLLLACCGRYHAGQPAPCAEKLMRSRYSAYVLGLTDYLVQTTLPVQQSGLNREAIAQWSAQSTWLGLEVESSEVFGGKPEHAFVTFTARWHDGNGEHSHKERSSFVQNQGRWYFIDSTVPLKAGRNDACPCGSEQKFKKCCSPYVV.

The protein belongs to the UPF0225 family.

In Pseudomonas savastanoi pv. phaseolicola (strain 1448A / Race 6) (Pseudomonas syringae pv. phaseolicola (strain 1448A / Race 6)), this protein is UPF0225 protein PSPPH_1399.